The primary structure comprises 613 residues: MEIALVPLENGGAMTVRGGDEARAGCGQATGGELQCPPTAGLSDGPKEPAPKGRGAQRDADSGVRPLPPLPDPGVRPLPPLPEELPRPRRPPPEDEEEEGDPGLGTVEDQALGTASLHHQRVHINISGLRFETQLGTLAQFPNTLLGDPAKRLRYFDPLRNEYFFDRNRPSFDGILYYYQSGGRLRRPVNVSLDVFADEIRFYQLGDEAMERFREDEGFIKEEEKPLPRNEFQRQVWLIFEYPESSGSARAIAIVSVLVILISIITFCLETLPEFRDERELLRHPPAPHQPPAPAPGANGSGVMAPPSGPTVAPLLPRTLADPFFIVETTCVIWFTFELLVRFFACPSKAGFSRNIMNIIDVVAIFPYFITLGTELAEQQPGGGGGGQNGQQAMSLAILRVIRLVRVFRIFKLSRHSKGLQILGKTLQASMRELGLLIFFLFIGVILFSSAVYFAEADNQGTHFSSIPDAFWWAVVTMTTVGYGDMRPITVGGKIVGSLCAIAGVLTIALPVPVIVSNFNYFYHRETDHEEPAVLKEEQGTQSQGPGLDRGVQRKVSGSRGSFCKAGGTLENADSARRGSCPLEKCNVKAKSNVDLRRSLYALCLDTSRETDL.

Residues 1-108 (MEIALVPLEN…EGDPGLGTVE (108 aa)) form a disordered region. Positions 1–211 (MEIALVPLEN…FYQLGDEAME (211 aa)) are tetramerization domain. At 1-247 (MEIALVPLEN…LIFEYPESSG (247 aa)) the chain is on the cytoplasmic side. Residues 45–62 (GPKEPAPKGRGAQRDADS) show a composition bias toward basic and acidic residues. Repeat copies occupy residues 61–71 (DSGVRPLPPLP) and 72–82 (DPGVRPLPPLP). Residues 61-82 (DSGVRPLPPLPDPGVRPLPPLP) are 2 X 11 AA tandem repeat of D-[SP]-G-V-R-P-L-P-P-L-P. A compositionally biased stretch (pro residues) spans 66-83 (PLPPLPDPGVRPLPPLPE). Basic and acidic residues predominate over residues 84 to 93 (ELPRPRRPPP). Lys-221 participates in a covalent cross-link: Glycyl lysine isopeptide (Lys-Gly) (interchain with G-Cter in SUMO). The helical transmembrane segment at 248–269 (SARAIAIVSVLVILISIITFCL) threads the bilayer. Topologically, residues 270–323 (ETLPEFRDERELLRHPPAPHQPPAPAPGANGSGVMAPPSGPTVAPLLPRTLADP) are extracellular. A disordered region spans residues 282–304 (LRHPPAPHQPPAPAPGANGSGVM). Residues 285 to 295 (PPAPHQPPAPA) are compositionally biased toward pro residues. The chain crosses the membrane as a helical span at residues 324-345 (FFIVETTCVIWFTFELLVRFFA). Residue Cys-346 is the site of S-palmitoyl cysteine attachment. Residues 346–356 (CPSKAGFSRNI) are Cytoplasmic-facing. The chain crosses the membrane as a helical span at residues 357-377 (MNIIDVVAIFPYFITLGTELA). Topologically, residues 378–395 (EQQPGGGGGGQNGQQAMS) are extracellular. The chain crosses the membrane as a helical; Voltage-sensor span at residues 396–416 (LAILRVIRLVRVFRIFKLSRH). Topologically, residues 417 to 431 (SKGLQILGKTLQASM) are cytoplasmic. The S4-S5 linker stretch occupies residues 418 to 431 (KGLQILGKTLQASM). A helical membrane pass occupies residues 432-453 (RELGLLIFFLFIGVILFSSAVY). Over 454 to 467 (FAEADNQGTHFSSI) the chain is Extracellular. The segment at residues 468–479 (PDAFWWAVVTMT) is an intramembrane region (helical). Residues 480–485 (TVGYGD) carry the Selectivity filter motif. The stretch at 480 to 487 (TVGYGDMR) is an intramembrane region. Topologically, residues 488–494 (PITVGGK) are extracellular. Residues 495-523 (IVGSLCAIAGVLTIALPVPVIVSNFNYFY) traverse the membrane as a helical segment. Residues 524 to 613 (HRETDHEEPA…CLDTSRETDL (90 aa)) lie on the Cytoplasmic side of the membrane. A disordered region spans residues 532–559 (PAVLKEEQGTQSQGPGLDRGVQRKVSGS). Lys-536 is covalently cross-linked (Glycyl lysine isopeptide (Lys-Gly) (interchain with G-Cter in SUMO)). Ser-557 carries the phosphoserine; by PKA modification. The PDZ-binding signature appears at 611 to 613 (TDL).

The protein belongs to the potassium channel family. A (Shaker) (TC 1.A.1.2) subfamily. Kv1.5/KCNA5 sub-subfamily. In terms of assembly, homotetramer and heterotetramer of potassium channel proteins. Interacts with DLG1, which enhances channel currents. Forms a ternary complex with DLG1 and CAV3. Interacts with KCNAB1. Interacts with UBE2I. Interacts with XIRP2; the interaction is required for normal action potential configuration in the heart. In terms of processing, glycosylated. Post-translationally, sumoylated on Lys-221, and Lys-536, preferentially with SUMO3. Sumoylation regulates the voltage sensitivity of the channel. As to expression, pancreatic islets and insulinoma.

It is found in the cell membrane. It catalyses the reaction K(+)(in) = K(+)(out). Inhibited by 4-aminopyridine, nicotine, bepridil, correolide, and endothelin-1. In terms of biological role, voltage-gated potassium channel that mediates transmembrane potassium transport in excitable membranes. Forms tetrameric potassium-selective channels through which potassium ions pass in accordance with their electrochemical gradient. The channel alternates between opened and closed conformations in response to the voltage difference across the membrane. Can form functional homotetrameric channels and heterotetrameric channels that contain variable proportions of KCNA1, KCNA2, KCNA4, KCNA5, and possibly other family members as well; channel properties depend on the type of alpha subunits that are part of the channel. Channel properties are modulated by cytoplasmic beta subunits that regulate the subcellular location of the alpha subunits and promote rapid inactivation. Homotetrameric channels display rapid activation and slow inactivation. Required for normal electrical conduction including formation of the infranodal ventricular conduction system and normal action potential configuration, as a result of its interaction with XIRP2. May play a role in regulating the secretion of insulin in normal pancreatic islets. Exhibits a faster depolarization rate, reduced voltage-dependent recovery from inactivation and an excessive cumulative inactivation. This is Potassium voltage-gated channel subfamily A member 5 (KCNA5) from Homo sapiens (Human).